A 319-amino-acid polypeptide reads, in one-letter code: Methionyl-tRNA formyltransferase (319 aa).

A (6S)-5,6,7,8-tetrahydrofolate-binding site is contributed by 113–116 (SLLP).

This sequence belongs to the Fmt family.

The catalysed reaction is L-methionyl-tRNA(fMet) + (6R)-10-formyltetrahydrofolate = N-formyl-L-methionyl-tRNA(fMet) + (6S)-5,6,7,8-tetrahydrofolate + H(+). Its function is as follows. Attaches a formyl group to the free amino group of methionyl-tRNA(fMet). The formyl group appears to play a dual role in the initiator identity of N-formylmethionyl-tRNA by promoting its recognition by IF2 and preventing the misappropriation of this tRNA by the elongation apparatus. This is Methionyl-tRNA formyltransferase from Hamiltonella defensa subsp. Acyrthosiphon pisum (strain 5AT).